We begin with the raw amino-acid sequence, 238 residues long: Ribosomal RNA small subunit methyltransferase G (238 aa).

S-adenosyl-L-methionine-binding positions include Gly-77, Phe-82, 128 to 129 (AE), and Arg-147.

It belongs to the methyltransferase superfamily. RNA methyltransferase RsmG family.

It is found in the cytoplasm. Its function is as follows. Specifically methylates the N7 position of guanine in position 535 of 16S rRNA. The polypeptide is Ribosomal RNA small subunit methyltransferase G (Geobacillus kaustophilus (strain HTA426)).